We begin with the raw amino-acid sequence, 111 residues long: Ribonuclease P protein component (111 aa).

The protein belongs to the RnpA family. As to quaternary structure, consists of a catalytic RNA component (M1 or rnpB) and a protein subunit.

It catalyses the reaction Endonucleolytic cleavage of RNA, removing 5'-extranucleotides from tRNA precursor.. Functionally, RNaseP catalyzes the removal of the 5'-leader sequence from pre-tRNA to produce the mature 5'-terminus. It can also cleave other RNA substrates such as 4.5S RNA. The protein component plays an auxiliary but essential role in vivo by binding to the 5'-leader sequence and broadening the substrate specificity of the ribozyme. This Alkaliphilus metalliredigens (strain QYMF) protein is Ribonuclease P protein component.